A 215-amino-acid polypeptide reads, in one-letter code: Serine acetyltransferase (215 aa).

Belongs to the transferase hexapeptide repeat family.

It localises to the cytoplasm. The catalysed reaction is L-serine + acetyl-CoA = O-acetyl-L-serine + CoA. Its pathway is amino-acid biosynthesis; L-cysteine biosynthesis; L-cysteine from L-serine: step 1/2. This Staphylococcus aureus (strain MRSA252) protein is Serine acetyltransferase (cysE).